The primary structure comprises 344 residues: Holliday junction branch migration complex subunit RuvB (344 aa).

Residues 1 to 25 (MTDSDPTLRPDRLPEDVQATDDRAL) are compositionally biased toward basic and acidic residues. The disordered stretch occupies residues 1–33 (MTDSDPTLRPDRLPEDVQATDDRALRPQSLDDF). The segment at 1 to 186 (MTDSDPTLRP…FGIPTRLNFY (186 aa)) is large ATPase domain (RuvB-L). Residues Leu25, Arg26, Gly67, Lys70, Thr71, Thr72, 133-135 (EDF), Arg176, Tyr186, and Arg223 each bind ATP. A Mg(2+)-binding site is contributed by Thr71. Residues 187–257 (TIAELDQIVA…IADSALTRLG (71 aa)) form a small ATPAse domain (RuvB-S) region. Residues 260 to 344 (DLGLDGADRR…PKRPDQGELI (85 aa)) form a head domain (RuvB-H) region. 3 residues coordinate DNA: Arg296, Arg315, and Arg320.

The protein belongs to the RuvB family. In terms of assembly, homohexamer. Forms an RuvA(8)-RuvB(12)-Holliday junction (HJ) complex. HJ DNA is sandwiched between 2 RuvA tetramers; dsDNA enters through RuvA and exits via RuvB. An RuvB hexamer assembles on each DNA strand where it exits the tetramer. Each RuvB hexamer is contacted by two RuvA subunits (via domain III) on 2 adjacent RuvB subunits; this complex drives branch migration. In the full resolvosome a probable DNA-RuvA(4)-RuvB(12)-RuvC(2) complex forms which resolves the HJ.

It is found in the cytoplasm. It carries out the reaction ATP + H2O = ADP + phosphate + H(+). The RuvA-RuvB-RuvC complex processes Holliday junction (HJ) DNA during genetic recombination and DNA repair, while the RuvA-RuvB complex plays an important role in the rescue of blocked DNA replication forks via replication fork reversal (RFR). RuvA specifically binds to HJ cruciform DNA, conferring on it an open structure. The RuvB hexamer acts as an ATP-dependent pump, pulling dsDNA into and through the RuvAB complex. RuvB forms 2 homohexamers on either side of HJ DNA bound by 1 or 2 RuvA tetramers; 4 subunits per hexamer contact DNA at a time. Coordinated motions by a converter formed by DNA-disengaged RuvB subunits stimulates ATP hydrolysis and nucleotide exchange. Immobilization of the converter enables RuvB to convert the ATP-contained energy into a lever motion, pulling 2 nucleotides of DNA out of the RuvA tetramer per ATP hydrolyzed, thus driving DNA branch migration. The RuvB motors rotate together with the DNA substrate, which together with the progressing nucleotide cycle form the mechanistic basis for DNA recombination by continuous HJ branch migration. Branch migration allows RuvC to scan DNA until it finds its consensus sequence, where it cleaves and resolves cruciform DNA. The chain is Holliday junction branch migration complex subunit RuvB from Jannaschia sp. (strain CCS1).